A 271-amino-acid chain; its full sequence is Glutamate racemase 3 (271 aa).

Substrate-binding positions include 15-16 and 47-48; these read DS and YG. The active-site Proton donor/acceptor is cysteine 78. 79 to 80 contributes to the substrate binding site; sequence NT. Cysteine 185 functions as the Proton donor/acceptor in the catalytic mechanism. A substrate-binding site is contributed by 186–187; the sequence is TH.

This sequence belongs to the aspartate/glutamate racemases family.

The enzyme catalyses L-glutamate = D-glutamate. Its pathway is cell wall biogenesis; peptidoglycan biosynthesis. Provides the (R)-glutamate required for cell wall biosynthesis. This chain is Glutamate racemase 3, found in Caldanaerobacter subterraneus subsp. tengcongensis (strain DSM 15242 / JCM 11007 / NBRC 100824 / MB4) (Thermoanaerobacter tengcongensis).